Consider the following 848-residue polypeptide: ATP-dependent RNA helicase dbp10 (848 aa).

The interval 22-43 (DIATDNQKDKHENVGENVSDED) is disordered. Residues 69 to 97 (SNFQSMGLNQTLLRAIFKKGFKAPTPIQR) carry the Q motif motif. The region spanning 100-272 (IPLLLEGRDV…KAGLQDPVLV (173 aa)) is the Helicase ATP-binding domain. 113–120 (ARTGSGKT) lines the ATP pocket. Positions 220–223 (DEAD) match the DEAD box motif. The Helicase C-terminal domain occupies 330–480 (RKRALELALK…TSSKQVKTDS (151 aa)). Residues 610–650 (NKVKPKGIKSEVASDKITDSSPGNMSEASESELEEVFKNPK) form a disordered region. The segment covering 617–627 (IKSEVASDKIT) has biased composition (basic and acidic residues). Residues 628–637 (DSSPGNMSEA) show a composition bias toward polar residues. Ser638, Ser733, and Ser736 each carry phosphoserine. The disordered stretch occupies residues 768–813 (ANDSPIRENKRYKHNKLQTPKPADKFRDNYHKQNKRNREAKERGIG). Residues 789–812 (PADKFRDNYHKQNKRNREAKERGI) are compositionally biased toward basic and acidic residues.

It belongs to the DEAD box helicase family. DDX54/DBP10 subfamily.

Its subcellular location is the nucleus. It is found in the nucleolus. The catalysed reaction is ATP + H2O = ADP + phosphate + H(+). Its function is as follows. ATP-binding RNA helicase involved in the biogenesis of 60S ribosomal subunits and is required for the normal formation of 25S and 5.8S rRNAs. This Schizosaccharomyces pombe (strain 972 / ATCC 24843) (Fission yeast) protein is ATP-dependent RNA helicase dbp10 (dbp10).